We begin with the raw amino-acid sequence, 200 residues long: Large ribosomal subunit protein uL4 (200 aa).

Positions Arg43–Asp71 are disordered.

It belongs to the universal ribosomal protein uL4 family. Part of the 50S ribosomal subunit.

In terms of biological role, one of the primary rRNA binding proteins, this protein initially binds near the 5'-end of the 23S rRNA. It is important during the early stages of 50S assembly. It makes multiple contacts with different domains of the 23S rRNA in the assembled 50S subunit and ribosome. Forms part of the polypeptide exit tunnel. In Aggregatibacter actinomycetemcomitans (Actinobacillus actinomycetemcomitans), this protein is Large ribosomal subunit protein uL4.